Consider the following 577-residue polypeptide: Arginine--tRNA ligase (577 aa).

The 'HIGH' region signature appears at 122 to 132 (PNVAKEMHVGH).

Belongs to the class-I aminoacyl-tRNA synthetase family. In terms of assembly, monomer.

The protein resides in the cytoplasm. It catalyses the reaction tRNA(Arg) + L-arginine + ATP = L-arginyl-tRNA(Arg) + AMP + diphosphate. In Histophilus somni (strain 129Pt) (Haemophilus somnus), this protein is Arginine--tRNA ligase.